The sequence spans 353 residues: Photosystem II D2 protein (353 aa).

T2 carries the post-translational modification N-acetylthreonine. T2 is modified (phosphothreonine). Residues 41 to 61 (CAYFALGGWFTGTTFVTSWYT) form a helical membrane-spanning segment. A chlorophyll a-binding site is contributed by H118. The helical transmembrane segment at 125–141 (GFMLRQFELARSVQLRP) threads the bilayer. Residues Q130 and N143 each coordinate pheophytin a. The helical transmembrane segment at 153 to 166 (VFVSVFLIYPLGQS) threads the bilayer. H198 serves as a coordination point for chlorophyll a. A helical membrane pass occupies residues 208-228 (AALLCAIHGATVENTLFEDGD). The a plastoquinone site is built by H215 and F262. H215 serves as a coordination point for Fe cation. Position 269 (H269) interacts with Fe cation. A helical membrane pass occupies residues 279–295 (GLWMSAIGVVGLALNLR).

This sequence belongs to the reaction center PufL/M/PsbA/D family. In terms of assembly, PSII is composed of 1 copy each of membrane proteins PsbA, PsbB, PsbC, PsbD, PsbE, PsbF, PsbH, PsbI, PsbJ, PsbK, PsbL, PsbM, PsbT, PsbX, PsbY, PsbZ, Psb30/Ycf12, at least 3 peripheral proteins of the oxygen-evolving complex and a large number of cofactors. It forms dimeric complexes. Requires The D1/D2 heterodimer binds P680, chlorophylls that are the primary electron donor of PSII, and subsequent electron acceptors. It shares a non-heme iron and each subunit binds pheophytin, quinone, additional chlorophylls, carotenoids and lipids. There is also a Cl(-1) ion associated with D1 and D2, which is required for oxygen evolution. The PSII complex binds additional chlorophylls, carotenoids and specific lipids. as cofactor.

It localises to the plastid. Its subcellular location is the chloroplast thylakoid membrane. The catalysed reaction is 2 a plastoquinone + 4 hnu + 2 H2O = 2 a plastoquinol + O2. Photosystem II (PSII) is a light-driven water:plastoquinone oxidoreductase that uses light energy to abstract electrons from H(2)O, generating O(2) and a proton gradient subsequently used for ATP formation. It consists of a core antenna complex that captures photons, and an electron transfer chain that converts photonic excitation into a charge separation. The D1/D2 (PsbA/PsbD) reaction center heterodimer binds P680, the primary electron donor of PSII as well as several subsequent electron acceptors. D2 is needed for assembly of a stable PSII complex. The chain is Photosystem II D2 protein from Phalaenopsis aphrodite subsp. formosana (Moth orchid).